The chain runs to 262 residues: MANLNWSYEGENGPEHWSKLYPIANGDNQSPIDIKTKEVKHDASLKPISVSYNPATAKEIVNVSHNFQVNFEDKDNQSVLKGGPFTGSFRLRQFHFHWGTADDHGSEHTVDGVKYSSELHIVHWNSEKYSSFSEAAEKPDGLAIIAVFIKAGQANPGLQKVIDALSSIKTKGKKAPFANFDPSLLIPQSSDYWSYHGSLTHPPLHESVTWIIYREPISASSEQLAKFRSLLSTAEGEKASSILHNHRLPQPLKGRQVKASFK.

A2 bears the N-acetylalanine mark. Positions 4–261 constitute an Alpha-carbonic anhydrase domain; that stretch reads LNWSYEGENG…LKGRQVKASF (258 aa). H65 (proton donor/acceptor) is an active-site residue. Zn(2+)-binding residues include H95, H97, and H120. Substrate contacts are provided by residues T200 and 200–201; that span reads TH.

This sequence belongs to the alpha-carbonic anhydrase family. Zn(2+) is required as a cofactor.

It is found in the cytoplasm. The catalysed reaction is hydrogencarbonate + H(+) = CO2 + H2O. The enzyme catalyses urea = cyanamide + H2O. With respect to regulation, inhibited by acetazolamide. In terms of biological role, catalyzes the reversible hydration of carbon dioxide. Can hydrate cyanamide to urea. The protein is Carbonic anhydrase 1 (CA1) of Monodelphis domestica (Gray short-tailed opossum).